The following is a 346-amino-acid chain: Growth hormone-inducible transmembrane protein (346 aa).

The transit peptide at 1 to 45 directs the protein to the mitochondrion; it reads MLAARLVCLRTLPSRVFQPTFITKASPLVKNSITKNQWLVTPSRE. Over 46–83 the chain is Mitochondrial matrix; it reads YATKTRIRTHRGKTGQELKEAALEPSMEKIFKIDQMGR. Residues 84–104 form a helical membrane-spanning segment; sequence WFVAGGAAVGLGALCYYGLGM. Residues 105–126 are Mitochondrial intermembrane-facing; the sequence is SNEIGAIEKAVIWPQYVKDRIH. The chain crosses the membrane as a helical span at residues 127-147; it reads STYMYLAGSIGLTALSALAVA. At 148-160 the chain is on the mitochondrial matrix side; sequence RTPALMNFMMTGS. A helical transmembrane segment spans residues 161 to 181; sequence WVTIGATFAAMIGAGMLVHSI. The Mitochondrial intermembrane portion of the chain corresponds to 182 to 191; that stretch reads SYEQSPGPKH. Residues 192-212 form a helical membrane-spanning segment; it reads LAWMLHSGVMGAVVAPLTILG. The Mitochondrial matrix portion of the chain corresponds to 213–214; it reads GP. A helical membrane pass occupies residues 215-235; sequence LLLRAAWYTAGIVGGLSTVAM. Residues 236 to 245 lie on the Mitochondrial intermembrane side of the membrane; the sequence is CAPSEKFLNM. The chain crosses the membrane as a helical span at residues 246–266; the sequence is GAPLGVGLGLVFASSLGSMFL. Residues 267-272 are Mitochondrial matrix-facing; the sequence is PPTSVA. Residues 273-293 form a helical membrane-spanning segment; the sequence is GATLYSVAMYGGLVLFSMFLL. The Mitochondrial intermembrane portion of the chain corresponds to 294–346; it reads YDTQKVIKRAEITPMYGAQKYDPINSMLTIYMDTLNIFMRVATMLATGSNRKK.

It belongs to the BI1 family. In terms of assembly, interacts with LETM1 and AFG3L2. Post-translationally, undergoes AFG3L2-mediated proteolytic degradation, upon hyperpolarization of mitochondria.

The protein resides in the mitochondrion inner membrane. The catalysed reaction is Ca(2+)(in) + 2 H(+)(out) = Ca(2+)(out) + 2 H(+)(in). It carries out the reaction K(+)(in) + H(+)(out) = K(+)(out) + H(+)(in). In terms of biological role, plays an important role in maintenance of mitochondrial morphology and in mediating either calcium or potassium/proton antiport. Mediates proton-dependent calcium efflux from mitochondrion. Also functions as an electroneutral mitochondrial proton/potassium exchanger. Required for the mitochondrial tubular network and cristae organization. Involved in apoptotic release of cytochrome c. Inhibits AFG3L2 proteolytic activity, stimulating respiration and stabilizing respiratory enzymes in actively respiring mitochondria. However, when mitochondria become hyperpolarized, GHITM loses its inhibitory activity toward AFG3L2 and the now active AFG3L2 turns first on GHITM and, if hyperpolarization persists, on other proteins of the mitochondria, leading to a broad remodeling of the mitochondrial proteome. The polypeptide is Growth hormone-inducible transmembrane protein (Ghitm) (Mus musculus (Mouse)).